The sequence spans 1525 residues: Autophagy-related protein 2 (1525 aa).

2 disordered regions span residues 216–247 (RGTSAPVTAGSTAHATTGFTSESDSDSDTDPF) and 712–738 (AELQESSSPDSSSRESSSGSESPPKRI). A compositionally biased stretch (polar residues) spans 220–230 (APVTAGSTAHA). Low complexity predominate over residues 716-733 (ESSSPDSSSRESSSGSES).

The protein belongs to the ATG2 family.

The protein resides in the preautophagosomal structure membrane. Its subcellular location is the endoplasmic reticulum membrane. It catalyses the reaction a 1,2-diacyl-sn-glycero-3-phosphocholine(in) = a 1,2-diacyl-sn-glycero-3-phosphocholine(out). It carries out the reaction a 1,2-diacyl-sn-glycero-3-phospho-L-serine(in) = a 1,2-diacyl-sn-glycero-3-phospho-L-serine(out). The enzyme catalyses a 1,2-diacyl-sn-glycero-3-phosphoethanolamine(in) = a 1,2-diacyl-sn-glycero-3-phosphoethanolamine(out). Lipid transfer protein required for autophagosome completion and peroxisome degradation. Tethers the edge of the isolation membrane (IM) to the endoplasmic reticulum (ER) and mediates direct lipid transfer from ER to IM for IM expansion. ATG2 binds to the ER exit site (ERES), which is the membrane source for autophagosome formation, using basic residues in its N-terminal region (NR) and to the expanding edge of the IM through its C-terminal region. The latter binding is assisted by an ATG18-PtdIns3P interaction. ATG2 then extracts phospholipids from the membrane source using its NR and transfers them to ATG9 to the IM through its predicted beta-sheet-rich structure for membrane expansion. In Yarrowia lipolytica (strain CLIB 122 / E 150) (Yeast), this protein is Autophagy-related protein 2 (ATG2).